The primary structure comprises 482 residues: D-inositol 3-phosphate glycosyltransferase (482 aa).

H63 contacts 1D-myo-inositol 3-phosphate. UDP-N-acetyl-alpha-D-glucosamine contacts are provided by residues Q69–P70 and G77. Residues D74–N79, K132, Y165, T189, and R209 each bind 1D-myo-inositol 3-phosphate. Residues R289, K294, and Q355 each coordinate UDP-N-acetyl-alpha-D-glucosamine. Positions 364, 365, and 367 each coordinate Mg(2+). Positions 377 and 385 each coordinate UDP-N-acetyl-alpha-D-glucosamine. A Mg(2+)-binding site is contributed by T391.

It belongs to the glycosyltransferase group 1 family. MshA subfamily. Homodimer.

It catalyses the reaction 1D-myo-inositol 3-phosphate + UDP-N-acetyl-alpha-D-glucosamine = 1D-myo-inositol 2-acetamido-2-deoxy-alpha-D-glucopyranoside 3-phosphate + UDP + H(+). Catalyzes the transfer of a N-acetyl-glucosamine moiety to 1D-myo-inositol 3-phosphate to produce 1D-myo-inositol 2-acetamido-2-deoxy-glucopyranoside 3-phosphate in the mycothiol biosynthesis pathway. This is D-inositol 3-phosphate glycosyltransferase from Salinispora tropica (strain ATCC BAA-916 / DSM 44818 / JCM 13857 / NBRC 105044 / CNB-440).